Here is a 174-residue protein sequence, read N- to C-terminus: Nascent polypeptide-associated complex subunit alpha (174 aa).

The residue at position 2 (Ser-2) is an N-acetylserine. In terms of domain architecture, NAC-A/B spans 14-78 (NKNEKKAREL…AKVDNFTQKL (65 aa)). Residues 85-137 (AQASGIMPSNEDVATKSPEDIQADMQAAAEGSVNAAAEEDDEEGEVDAGDLNK) form a disordered region. The residue at position 93 (Ser-93) is a Phosphoserine. The span at 111–120 (AAAEGSVNAA) shows a compositional bias: low complexity. Residues 121-132 (AEEDDEEGEVDA) show a composition bias toward acidic residues. In terms of domain architecture, UBA spans 135 to 174 (LNKDDIELVVQQTNVSKNQAIKALKAHNGDLVNAIMSLSK).

The protein belongs to the NAC-alpha family. As to quaternary structure, part of the nascent polypeptide-associated complex (NAC), consisting of EGD2 and either EGD1 or BTT1. NAC associates with ribosomes via EGD1 or BTT1, and with the CCR4-NOT complex.

It is found in the cytoplasm. Its subcellular location is the nucleus. In terms of biological role, component of the nascent polypeptide-associated complex (NAC), a dynamic component of the ribosomal exit tunnel, protecting the emerging polypeptides from interaction with other cytoplasmic proteins to ensure appropriate nascent protein targeting. The NAC complex also promotes mitochondrial protein import by enhancing productive ribosome interactions with the outer mitochondrial membrane and blocks the inappropriate interaction of ribosomes translating non-secretory nascent polypeptides with translocation sites in the membrane of the endoplasmic reticulum. EGD2 may also be involved in transcription regulation. This Saccharomyces cerevisiae (strain YJM789) (Baker's yeast) protein is Nascent polypeptide-associated complex subunit alpha (EGD2).